Reading from the N-terminus, the 354-residue chain is Peptide-N(4)-(N-acetyl-beta-D-glucosaminyl)asparagine amidase F (354 aa).

The signal sequence occupies residues 1–40 (MRKLLIFSISAYLMAGIVSCKGVDSATPVTEDRLALNAVN). A disulfide bridge links Cys-91 with Cys-96. Catalysis depends on residues Asp-100, Glu-158, and Glu-246. 2 disulfides stabilise this stretch: Cys-244–Cys-248 and Cys-271–Cys-292.

Monomer.

The enzyme catalyses Hydrolysis of an N(4)-(acetyl-beta-D-glucosaminyl)asparagine residue in which the glucosamine residue may be further glycosylated, to yield a (substituted) N-acetyl-beta-D-glucosaminylamine and a peptide containing an aspartate residue.. Cleaves an entire glycan from a glycoprotein. Requires that the glycosylated asparagine moiety (reaction 1) be substituted on its amino (R1) and carboxyl (R2) terminus with a polypeptide chain. The sequence is that of Peptide-N(4)-(N-acetyl-beta-D-glucosaminyl)asparagine amidase F (ngl) from Elizabethkingia miricola (Chryseobacterium miricola).